A 501-amino-acid chain; its full sequence is Glycerol kinase (501 aa).

Position 12 (threonine 12) interacts with ADP. Threonine 12, threonine 13, and serine 14 together coordinate ATP. Position 12 (threonine 12) interacts with sn-glycerol 3-phosphate. Residue arginine 16 participates in ADP binding. Residues arginine 82, glutamate 83, tyrosine 134, and aspartate 244 each coordinate sn-glycerol 3-phosphate. Glycerol-binding residues include arginine 82, glutamate 83, tyrosine 134, aspartate 244, and glutamine 245. ADP contacts are provided by threonine 266 and glycine 310. ATP contacts are provided by threonine 266, glycine 310, glutamine 314, and glycine 411. 2 residues coordinate ADP: glycine 411 and asparagine 415.

It belongs to the FGGY kinase family.

It catalyses the reaction glycerol + ATP = sn-glycerol 3-phosphate + ADP + H(+). It participates in polyol metabolism; glycerol degradation via glycerol kinase pathway; sn-glycerol 3-phosphate from glycerol: step 1/1. With respect to regulation, inhibited by fructose 1,6-bisphosphate (FBP). Functionally, key enzyme in the regulation of glycerol uptake and metabolism. Catalyzes the phosphorylation of glycerol to yield sn-glycerol 3-phosphate. This is Glycerol kinase from Methylobacterium radiotolerans (strain ATCC 27329 / DSM 1819 / JCM 2831 / NBRC 15690 / NCIMB 10815 / 0-1).